The chain runs to 470 residues: Cytochrome P450 monooxygenase sirC (470 aa).

The helical transmembrane segment at 12–34 (LRGMVVGTIMLLCYRYGLALSIL) threads the bilayer. N-linked (GlcNAc...) asparagine glycosylation is present at N399. Heme is bound at residue C410.

It belongs to the cytochrome P450 family. Heme serves as cofactor.

The protein resides in the membrane. The protein operates within mycotoxin biosynthesis. Cytochrome P450 monooxygenase; part of the gene cluster that mediates the biosynthesis of sirodesmin PL, an epipolythiodioxopiperazine (ETP) characterized by a disulfide bridged cyclic dipeptide and that acts as a phytotoxin which is involved in the blackleg didease of canola. SirD catalyzes the O-prenylation of L-tyrosine (L-Tyr) in the presence of dimethylallyl diphosphate (DMAPP) to yield 4-O-dimethylallyl-L-Tyr, and therefore represents probably the first pathway-specific enzyme in the biosynthesis of sirodesmin PL. 4-O-dimethylallyl-L-Tyr, then undergoes condensation with L-Ser in a reaction catalyzed by the non-ribosomal peptide synthase sirP to form the diketopiperazine (DKP) backbone. Further bishydroxylation of the DKP performed by the cytochrome P450 monooxygenase sirC leads to the production of the intermediate phomamide. This step is essential to form the reactive thiol group required for toxicity of sirodesmin PL. The next steps of sirodesmin biosynthesis are not well understood yet, but some predictions could be made from intermediate compounds identification. Phomamide is converted into phomalizarine via oxidation, probably by sirT. Further oxidation, methylation (by sirM or sirN) and reduction steps convert phomalizarine to deacetyl sirodesmin. Finally, acetyltransferase sirH probably acetylates deacetyl sirodesmin to produce sirodesmin PL. This is Cytochrome P450 monooxygenase sirC from Leptosphaeria maculans (Blackleg fungus).